A 470-amino-acid chain; its full sequence is Serine hydroxymethyltransferase 5 (470 aa).

Residue Lys-244 is modified to N6-(pyridoxal phosphate)lysine.

The protein belongs to the SHMT family. Homotetramer. It depends on pyridoxal 5'-phosphate as a cofactor.

Its subcellular location is the cytoplasm. It catalyses the reaction (6R)-5,10-methylene-5,6,7,8-tetrahydrofolate + glycine + H2O = (6S)-5,6,7,8-tetrahydrofolate + L-serine. Its pathway is one-carbon metabolism; tetrahydrofolate interconversion. In terms of biological role, catalyzes the interconversion of serine and glycine. The protein is Serine hydroxymethyltransferase 5 (SHM5) of Arabidopsis thaliana (Mouse-ear cress).